The primary structure comprises 359 residues: Trans-enoyl reductase RAP1 (359 aa).

C49–K52 contacts NADP(+). Position 137–144 (T137–M144) interacts with substrate. Residues S195–N198, Y213, and L260–E261 each bind NADP(+). Residue G281–L285 coordinates substrate. An NADP(+)-binding site is contributed by V350–A351.

The protein belongs to the zinc-containing alcohol dehydrogenase family. As to quaternary structure, monomer.

It participates in secondary metabolite biosynthesis. Trans-enoyl reductase; part of the gene cluster that mediates the biosynthesis of a tyrosine-derived cytochalasan acting as a fungal signal recognized by resistant rice plants and leads to avirulence in Pi33 resistant rice cultivars. The first step in the pathway is catalyzed by the hybrid PKS-NRPS ACE1, assisted by the enoyl reductase RAP1, that are responsible for fusion of the tyrosine precursor and the polyketide backbone. The polyketide synthase module (PKS) of ACE1 is responsible for the synthesis of the polyketide backbone and the downstream nonribosomal peptide synthetase (NRPS) amidates the carboxyl end of the polyketide with the tyrosine precursor. Because ACE1 lacks a designated enoylreductase (ER) domain, the required activity is provided the enoyl reductase RAP1. Reduction by the hydrolyase ORFZ, followed by dehydration and intra-molecular Diels-Alder cyclization by the Diels-Alderase ORF3 then yield the required isoindolone-fused macrocycle. A number of oxidative steps catalyzed by the tailoring enzymes identified within the cluster, including cytochrome P450 monooxygenases CYP1 to CYP4, the FAD-linked oxidoreductase OXR2 and the short-chain dehydrogenase/reductase OXR1, are further required to afford the final cytochalasans that confer avirulence and which have still to be identified. The monooxygenase CYP1 has been shown to be a site-selective C-18 hydroxylase whereas the function of CYP3 is the site-selective epoxidation of the C-6/C-7 olefin that is present in some intermediate compounds. Finally, SYN2 and RAP2 are not required for avirulence in Pi33 resistant rice cultivars. The sequence is that of Trans-enoyl reductase RAP1 from Pyricularia oryzae (strain 70-15 / ATCC MYA-4617 / FGSC 8958) (Rice blast fungus).